The sequence spans 270 residues: Putative pyruvate, phosphate dikinase regulatory protein 2 (270 aa).

151–158 provides a ligand contact to ADP; that stretch reads GVSRTSKT.

The protein belongs to the pyruvate, phosphate/water dikinase regulatory protein family. PDRP subfamily.

The catalysed reaction is N(tele)-phospho-L-histidyl/L-threonyl-[pyruvate, phosphate dikinase] + ADP = N(tele)-phospho-L-histidyl/O-phospho-L-threonyl-[pyruvate, phosphate dikinase] + AMP + H(+). The enzyme catalyses N(tele)-phospho-L-histidyl/O-phospho-L-threonyl-[pyruvate, phosphate dikinase] + phosphate + H(+) = N(tele)-phospho-L-histidyl/L-threonyl-[pyruvate, phosphate dikinase] + diphosphate. Bifunctional serine/threonine kinase and phosphorylase involved in the regulation of the pyruvate, phosphate dikinase (PPDK) by catalyzing its phosphorylation/dephosphorylation. This chain is Putative pyruvate, phosphate dikinase regulatory protein 2, found in Listeria monocytogenes serovar 1/2a (strain ATCC BAA-679 / EGD-e).